A 504-amino-acid chain; its full sequence is uncharacterized protein (504 aa).

The disordered stretch occupies residues 431–483; sequence GEAEKYRKLQDGDEDEEGTGKPEPKKARRKGFGGKFAPKHEEKVTRAVGVNSE.

This sequence belongs to the CBF/MAK21 family.

This is an uncharacterized protein from Caenorhabditis elegans.